The primary structure comprises 286 residues: Translocon-associated protein subunit alpha (286 aa).

The signal sequence occupies residues Met-1–Leu-21. At Arg-22 to Thr-207 the chain is on the lumenal side. Residues Ser-28–Ala-83 are disordered. Residues Asp-34–Gly-75 show a composition bias toward acidic residues. N-linked (GlcNAc...) asparagine glycosylation is found at Asn-136 and Asn-191. Residues Ile-208–Leu-228 form a helical membrane-spanning segment. The Cytoplasmic portion of the chain corresponds to Leu-229–Glu-286. Ser-247 carries the post-translational modification Phosphoserine. Thr-260 carries the phosphothreonine modification. Residues Ile-264–Glu-286 form a disordered region. A Phosphoserine modification is found at Ser-268. The segment covering Ser-268–Lys-279 has biased composition (basic residues).

It belongs to the TRAP-alpha family. In terms of assembly, heterotetramer of TRAP-alpha, TRAP-beta, TRAP-delta and TRAP-gamma. Interacts with palmitoylated calnexin (CALX), the interaction is required for efficient folding of glycosylated proteins. Phosphorylated in its cytoplasmic tail.

It is found in the endoplasmic reticulum membrane. Its function is as follows. TRAP proteins are part of a complex whose function is to bind calcium to the ER membrane and thereby regulate the retention of ER resident proteins. May be involved in the recycling of the translocation apparatus after completion of the translocation process or may function as a membrane-bound chaperone facilitating folding of translocated proteins. This is Translocon-associated protein subunit alpha (SSR1) from Oryctolagus cuniculus (Rabbit).